The primary structure comprises 432 residues: MPNVVVVGAQWGDEGKGKIVDLLTQYADVVVRFQGGNNAGHTLVVGGEKTVLHLIPSGILHPGKSCVIGNGVVIDPEVLVLEIDRLKAKGALKDDGQLVVSLDAHVIMPWHKAIDVAREQAMGEGKIGTTGRGIGPTYEDKVARRGLRIRDLLDEARLARKVKERAALAREELARLGAKLELDEPALVKRYAELGRRVAGYATDVSIWLHRALQQGKSLLFEGAQGTMLDVDHGTYPFVTSSNTVAGNAVVGCGLGPTAVDYVLGISKAYSTRVGGGPYPTELKDETGERLRKLGGEYGATTGRPRRTGWLDALALRYAVRVNGLSGIAMTKLDVLTGFDTVKIAVGYRLDGKVLDEMPSDPEVIERCTPVYEELPGWTEKLEHLRTWDDLPPRARAYVKRVEELAGVKVVGCSVGADRGETILVENPFLAR.

Residues 12-18 (GDEGKGK) and 40-42 (GHT) contribute to the GTP site. The Proton acceptor role is filled by Asp13. The Mg(2+) site is built by Asp13 and Gly40. IMP is bound by residues 13 to 16 (DEGK), 38 to 41 (NAGH), Thr130, Arg144, Gln225, Thr240, and Arg304. His41 acts as the Proton donor in catalysis. Residue 300 to 306 (ATTGRPR) coordinates substrate. Residues Arg306, 332 to 334 (KLD), and 414 to 416 (SVG) each bind GTP.

The protein belongs to the adenylosuccinate synthetase family. Homodimer. Mg(2+) serves as cofactor.

It is found in the cytoplasm. The catalysed reaction is IMP + L-aspartate + GTP = N(6)-(1,2-dicarboxyethyl)-AMP + GDP + phosphate + 2 H(+). It functions in the pathway purine metabolism; AMP biosynthesis via de novo pathway; AMP from IMP: step 1/2. In terms of biological role, plays an important role in the de novo pathway of purine nucleotide biosynthesis. Catalyzes the first committed step in the biosynthesis of AMP from IMP. The chain is Adenylosuccinate synthetase from Anaeromyxobacter dehalogenans (strain 2CP-1 / ATCC BAA-258).